A 94-amino-acid polypeptide reads, in one-letter code: Co-chaperonin GroES (94 aa).

This sequence belongs to the GroES chaperonin family. Heptamer of 7 subunits arranged in a ring. Interacts with the chaperonin GroEL.

The protein resides in the cytoplasm. Together with the chaperonin GroEL, plays an essential role in assisting protein folding. The GroEL-GroES system forms a nano-cage that allows encapsulation of the non-native substrate proteins and provides a physical environment optimized to promote and accelerate protein folding. GroES binds to the apical surface of the GroEL ring, thereby capping the opening of the GroEL channel. The polypeptide is Co-chaperonin GroES (Halothermothrix orenii (strain H 168 / OCM 544 / DSM 9562)).